A 151-amino-acid chain; its full sequence is Protein-export protein SecB (151 aa).

This sequence belongs to the SecB family. Homotetramer, a dimer of dimers. One homotetramer interacts with 1 SecA dimer.

It localises to the cytoplasm. Its function is as follows. One of the proteins required for the normal export of preproteins out of the cell cytoplasm. It is a molecular chaperone that binds to a subset of precursor proteins, maintaining them in a translocation-competent state. It also specifically binds to its receptor SecA. This is Protein-export protein SecB from Azoarcus sp. (strain BH72).